We begin with the raw amino-acid sequence, 72 residues long: QVFDQACKGVYDRAIFKKLDRVCDDCYNLYRKPYVAVSCRGNCYNNLVFRQCLEELFLGNGFNEYISGVQTV.

At Gln1 the chain carries Pyrrolidone carboxylic acid. Phe3 is subject to D-phenylalanine; in form CHHA-II. 3 disulfide bridges follow: Cys7-Cys43, Cys23-Cys39, and Cys26-Cys52. Residue Val72 is modified to Valine amide.

Stereoinversion of L-Phe (in CHHA-I) to D-Phe (in CHHA-II).

The protein resides in the secreted. Its function is as follows. Hormone found in the sinus gland of isopods and decapods which controls the blood sugar level. Has a secretagogue action over the amylase released from the midgut gland. May act as a stress hormone and may be involved in the control of molting and reproduction. This is Crustacean hyperglycemic hormone A from Cherax destructor (Common yabby crayfish).